Here is a 562-residue protein sequence, read N- to C-terminus: Potassium-transporting ATPase potassium-binding subunit (562 aa).

Helical transmembrane passes span 6 to 26, 62 to 82, 132 to 152, 175 to 195, 253 to 273, 283 to 303, 327 to 347, 356 to 376, 379 to 399, 416 to 436, 483 to 503, and 524 to 544; these read FLLI…LGGF, YALA…VLLM, GLTV…FALI, LYVL…QGVL, FVQM…FGQV, LIWA…YAEL, FGIL…CGAV, ALGG…FGGV, GLYG…LMIG, MTAL…ALAL, LLLA…VLAI, and GLLF…LTFI.

This sequence belongs to the KdpA family. As to quaternary structure, the system is composed of three essential subunits: KdpA, KdpB and KdpC.

Its subcellular location is the cell inner membrane. Part of the high-affinity ATP-driven potassium transport (or Kdp) system, which catalyzes the hydrolysis of ATP coupled with the electrogenic transport of potassium into the cytoplasm. This subunit binds the periplasmic potassium ions and delivers the ions to the membrane domain of KdpB through an intramembrane tunnel. The polypeptide is Potassium-transporting ATPase potassium-binding subunit (Yersinia pestis bv. Antiqua (strain Antiqua)).